Here is a 226-residue protein sequence, read N- to C-terminus: Oxaloacetate tautomerase FAHD2, mitochondrial (226 aa).

The transit peptide at 1–30 directs the protein to the mitochondrion; the sequence is MAAAAQRLLAASTKIVGVGRNFVAHAKELG. 3 residues coordinate Mg(2+): Glu-69, Glu-71, and Asp-100.

The protein belongs to the FAH family. Mg(2+) is required as a cofactor. Requires Mn(2+) as cofactor.

It is found in the mitochondrion. It catalyses the reaction oxaloacetate = enol-oxaloacetate. Its function is as follows. Tautomerase that converts enol-oxaloacetate, a strong inhibitor of succinate dehydrogenase, to the physiological keto form of oxaloacetate. This Oryza sativa subsp. japonica (Rice) protein is Oxaloacetate tautomerase FAHD2, mitochondrial.